The chain runs to 349 residues: Selenide, water dikinase (349 aa).

Cys17 is a catalytic residue. Residues Lys20 and 48-50 (MAD) each bind ATP. Residue Asp51 coordinates Mg(2+). Residues Asp68, Asp91, and 139-141 (GHS) contribute to the ATP site. Position 91 (Asp91) interacts with Mg(2+). Asp227 is a binding site for Mg(2+).

This sequence belongs to the selenophosphate synthase 1 family. Class I subfamily. Homodimer. The cofactor is Mg(2+).

The catalysed reaction is hydrogenselenide + ATP + H2O = selenophosphate + AMP + phosphate + 2 H(+). Synthesizes selenophosphate from selenide and ATP. The protein is Selenide, water dikinase of Rhizobium meliloti (strain 1021) (Ensifer meliloti).